Consider the following 274-residue polypeptide: Eukaryotic translation initiation factor 3 subunit G (274 aa).

A phosphoserine mark is found at Ser-146, Ser-164, and Ser-171. The tract at residues 149–170 is disordered; the sequence is ANTSAAATPEPDTDASGKYVPP. The 80-residue stretch at 191–270 folds into the RRM domain; sequence TTLKISQLNT…LILHLEWPKK (80 aa).

It belongs to the eIF-3 subunit G family. In terms of assembly, component of the eukaryotic translation initiation factor 3 (eIF-3) complex.

Its subcellular location is the cytoplasm. Its function is as follows. RNA-binding component of the eukaryotic translation initiation factor 3 (eIF-3) complex, which is involved in protein synthesis of a specialized repertoire of mRNAs and, together with other initiation factors, stimulates binding of mRNA and methionyl-tRNAi to the 40S ribosome. The eIF-3 complex specifically targets and initiates translation of a subset of mRNAs involved in cell proliferation. This subunit can bind 18S rRNA. In Meyerozyma guilliermondii (strain ATCC 6260 / CBS 566 / DSM 6381 / JCM 1539 / NBRC 10279 / NRRL Y-324) (Yeast), this protein is Eukaryotic translation initiation factor 3 subunit G.